Here is a 562-residue protein sequence, read N- to C-terminus: Potassium-transporting ATPase potassium-binding subunit (562 aa).

A run of 10 helical transmembrane segments spans residues 5–25 (AFLL…PLGS), 63–83 (AAAI…LLMA), 132–152 (GLTV…FALI), 175–195 (LYVL…QGVL), 250–270 (LSNI…CFAF), 279–299 (QGHA…AVVM), 379–399 (GLYG…LMIG), 416–436 (MTAL…ALAL), 483–503 (VLLA…VLAI), and 526–546 (LFIG…FIPA).

It belongs to the KdpA family. As to quaternary structure, the system is composed of three essential subunits: KdpA, KdpB and KdpC.

It localises to the cell inner membrane. Functionally, part of the high-affinity ATP-driven potassium transport (or Kdp) system, which catalyzes the hydrolysis of ATP coupled with the electrogenic transport of potassium into the cytoplasm. This subunit binds the periplasmic potassium ions and delivers the ions to the membrane domain of KdpB through an intramembrane tunnel. The protein is Potassium-transporting ATPase potassium-binding subunit of Pectobacterium atrosepticum (strain SCRI 1043 / ATCC BAA-672) (Erwinia carotovora subsp. atroseptica).